The primary structure comprises 202 residues: Cytochrome c oxidase assembly protein CtaG (202 aa).

Residues 1-14 (MSDKAAAPRKQGRN) are Cytoplasmic-facing. A helical; Signal-anchor for type II membrane protein membrane pass occupies residues 15-37 (NGAVVMMCLSFVFGMGAMSYAAV). Residues 38–202 (PLYRIFCQVT…GGTVKIEKKL (165 aa)) lie on the Periplasmic side of the membrane.

It belongs to the COX11/CtaG family.

It localises to the cell inner membrane. Functionally, exerts its effect at some terminal stage of cytochrome c oxidase synthesis, probably by being involved in the insertion of the copper B into subunit I. The chain is Cytochrome c oxidase assembly protein CtaG from Rhizobium etli (strain ATCC 51251 / DSM 11541 / JCM 21823 / NBRC 15573 / CFN 42).